The sequence spans 517 residues: Recombining binding protein suppressor of hairless-like protein (517 aa).

Residues 26 to 37 (EMQLQSEADRRS) show a composition bias toward basic and acidic residues. Positions 26 to 48 (EMQLQSEADRRSLPGTWTRSSPE) are disordered. DNA-binding regions lie at residues 78-88 (QKSYGNEKRFF), 193-198 (SKPSQK), and 220-225 (RLRSQT). The 126-residue stretch at 387–512 (LISTLELSGG…HQEFTRTNFH (126 aa)) folds into the IPT/TIG domain.

Belongs to the Su(H) family. As to quaternary structure, interacts weakly with EBNA2. Does not interact with any Notch proteins.

The protein localises to the nucleus. Functionally, putative transcription factor, which cooperates with EBNA2 to activate transcription. The polypeptide is Recombining binding protein suppressor of hairless-like protein (RBPJL) (Homo sapiens (Human)).